Reading from the N-terminus, the 527-residue chain is Probable malate:quinone oxidoreductase (527 aa).

It belongs to the MQO family. FAD serves as cofactor.

The enzyme catalyses (S)-malate + a quinone = a quinol + oxaloacetate. Its pathway is carbohydrate metabolism; tricarboxylic acid cycle; oxaloacetate from (S)-malate (quinone route): step 1/1. In Pectobacterium atrosepticum (strain SCRI 1043 / ATCC BAA-672) (Erwinia carotovora subsp. atroseptica), this protein is Probable malate:quinone oxidoreductase.